The sequence spans 459 residues: Glycerol-3-phosphate acyltransferase, chloroplastic (459 aa).

Residues 1–90 (MTLTFSSSAA…FNEAAGETPS (90 aa)) constitute a chloroplast transit peptide. The HXXXXD motif signature appears at 229-234 (HQSEAD).

It belongs to the GPAT/DAPAT family.

The protein resides in the plastid. It localises to the chloroplast stroma. The catalysed reaction is sn-glycerol 3-phosphate + an acyl-CoA = a 1-acyl-sn-glycero-3-phosphate + CoA. The protein operates within phospholipid metabolism; CDP-diacylglycerol biosynthesis; CDP-diacylglycerol from sn-glycerol 3-phosphate: step 1/3. Its function is as follows. Esterifies acyl-group from acyl-ACP to the sn-1 position of glycerol-3-phosphate. The enzyme from chilling-resistant plants discriminates against non-fluid palmitic acid and selects oleic acid whereas the enzyme from sensitive plants accepts both fatty acids. This is an oleate-selective acyltransferase. In Arabidopsis thaliana (Mouse-ear cress), this protein is Glycerol-3-phosphate acyltransferase, chloroplastic (ATS1).